The primary structure comprises 72 residues: Prophage late control protein OgrK (72 aa).

Functionally, cryptic version of the phage P2 OGR protein which acts as an activator of P2 late transcription. This chain is Prophage late control protein OgrK (ogrK), found in Escherichia coli (strain K12).